Reading from the N-terminus, the 300-residue chain is MTENNPTRCGYVAIVGRPNVGKSTLLNHILGQKLAITSRKPQTTRHNMLGIKTEGDVQAIYVDTPGMHKANDKALNRYMNRNASAALKDVDVVIFVVDRTRWTDEDQLVLERVQYVTGPLIIAVNKTDRMDEKAELIPHLQWLQEQLPNAEVVPISAQQGHNLEALEALIAKHLPENDHFFPEDQITDRSSRFLAAELVREKIMRQLGAELPYQITVEIEEFKQQGHVLHIHALILVERDGQKKIIIGDKGERIKRIGSDARKDMETLFDAKVMLNLWVKVKGGWSDDERALRSLGYGDL.

In terms of domain architecture, Era-type G spans 8–176 (RCGYVAIVGR…EALIAKHLPE (169 aa)). Positions 16–23 (GRPNVGKS) are G1. A GTP-binding site is contributed by 16-23 (GRPNVGKS). Residues 42–46 (QTTRH) form a G2 region. Residues 63–66 (DTPG) are G3. GTP contacts are provided by residues 63-67 (DTPGM) and 125-128 (NKTD). The segment at 125 to 128 (NKTD) is G4. Residues 155–157 (ISA) are G5. Residues 199-283 (VREKIMRQLG…MLNLWVKVKG (85 aa)) form the KH type-2 domain.

This sequence belongs to the TRAFAC class TrmE-Era-EngA-EngB-Septin-like GTPase superfamily. Era GTPase family. As to quaternary structure, monomer.

Its subcellular location is the cytoplasm. The protein resides in the cell inner membrane. Its function is as follows. An essential GTPase that binds both GDP and GTP, with rapid nucleotide exchange. Plays a role in 16S rRNA processing and 30S ribosomal subunit biogenesis and possibly also in cell cycle regulation and energy metabolism. The chain is GTPase Era from Pseudomonas putida (strain W619).